Reading from the N-terminus, the 240-residue chain is Zein-alpha 19C2 (240 aa).

Positions Met1–Ala21 are cleaved as a signal peptide.

It belongs to the zein family. In terms of assembly, interacts with OP10 (via N-terminus).

Functionally, zeins are major seed storage proteins. The polypeptide is Zein-alpha 19C2 (Zea mays (Maize)).